A 103-amino-acid chain; its full sequence is Antitoxin VapB1 (103 aa).

Antitoxin component of a type II toxin-antitoxin (TA) system. Upon expression in E.coli neutralizes the effect of cognate toxin VapC1, partially inhibits the RNase activity of VapC1 in vitro. This chain is Antitoxin VapB1 (vapB1), found in Rickettsia felis (strain ATCC VR-1525 / URRWXCal2) (Rickettsia azadi).